The primary structure comprises 345 residues: Uroporphyrinogen decarboxylase (345 aa).

Residues Arg-27 to Arg-31, Phe-46, Asp-76, Tyr-152, Ser-207, and His-320 each bind substrate.

Belongs to the uroporphyrinogen decarboxylase family. As to quaternary structure, homodimer.

It is found in the cytoplasm. It carries out the reaction uroporphyrinogen III + 4 H(+) = coproporphyrinogen III + 4 CO2. The protein operates within porphyrin-containing compound metabolism; protoporphyrin-IX biosynthesis; coproporphyrinogen-III from 5-aminolevulinate: step 4/4. Catalyzes the decarboxylation of four acetate groups of uroporphyrinogen-III to yield coproporphyrinogen-III. This is Uroporphyrinogen decarboxylase from Geobacillus thermodenitrificans (strain NG80-2).